The primary structure comprises 552 residues: Rqc2 homolog RqcH (552 aa).

2 coiled-coil regions span residues 271-317 (RDRV…QKGE) and 357-398 (NAQR…MLGQ).

The protein belongs to the NEMF family. In terms of assembly, associates with stalled 50S ribosomal subunits, binds to RqcH. Recombinant protein interacts with the N-terminal 30 kDa of human fibronectin (FN1).

Functionally, key component of the ribosome quality control system (RQC), a ribosome-associated complex that mediates the extraction of incompletely synthesized nascent chains from stalled ribosomes and their subsequent degradation. RqcH recruits Ala-charged tRNA, and with RqcP directs the elongation of stalled nascent chains on 50S ribosomal subunits, leading to non-templated C-terminal alanine extensions (Ala tail). The Ala tail promotes nascent chain degradation. May add between 1 and at least 8 Ala residues. Binds to stalled 50S ribosomal subunits. The protein is Rqc2 homolog RqcH of Streptococcus suis (strain 05ZYH33).